The chain runs to 123 residues: Large ribosomal subunit protein bL12 (123 aa).

The protein belongs to the bacterial ribosomal protein bL12 family. As to quaternary structure, homodimer. Part of the ribosomal stalk of the 50S ribosomal subunit. Forms a multimeric L10(L12)X complex, where L10 forms an elongated spine to which 2 to 4 L12 dimers bind in a sequential fashion. Binds GTP-bound translation factors.

Forms part of the ribosomal stalk which helps the ribosome interact with GTP-bound translation factors. Is thus essential for accurate translation. In Bartonella bacilliformis (strain ATCC 35685 / KC583 / Herrer 020/F12,63), this protein is Large ribosomal subunit protein bL12.